Here is a 344-residue protein sequence, read N- to C-terminus: Uroporphyrinogen decarboxylase (344 aa).

Substrate-binding positions include 26–30, Phe45, Asp75, Tyr151, Ser206, and His320; that span reads RQAGR.

This sequence belongs to the uroporphyrinogen decarboxylase family. As to quaternary structure, homodimer.

It is found in the cytoplasm. The enzyme catalyses uroporphyrinogen III + 4 H(+) = coproporphyrinogen III + 4 CO2. It functions in the pathway porphyrin-containing compound metabolism; protoporphyrin-IX biosynthesis; coproporphyrinogen-III from 5-aminolevulinate: step 4/4. Its function is as follows. Catalyzes the decarboxylation of four acetate groups of uroporphyrinogen-III to yield coproporphyrinogen-III. The protein is Uroporphyrinogen decarboxylase of Staphylococcus haemolyticus (strain JCSC1435).